Reading from the N-terminus, the 117-residue chain is Bomanin Bicipital 1 (117 aa).

An N-terminal signal peptide occupies residues 1-20 (MKCLILSFAIFVVLASQATA). 2 disulfide bridges follow: cysteine 29–cysteine 32 and cysteine 107–cysteine 110.

Belongs to the bomanin family. Hemolymph (at protein level).

Its subcellular location is the secreted. Secreted immune-induced peptide induced by Toll signaling. Has a role in resistance to bacterial and fungal infections. The sequence is that of Bomanin Bicipital 1 from Drosophila melanogaster (Fruit fly).